We begin with the raw amino-acid sequence, 378 residues long: Chaperone protein DnaJ 1 (378 aa).

Residues 4 to 68 (DYYGILGVDR…DKRRIVDMGG (65 aa)) enclose the J domain. Residues 129–211 (GVKKDLTLDT…CAGDGRVRAR (83 aa)) form a CR-type zinc finger. Residues cysteine 142, cysteine 145, cysteine 159, cysteine 162, cysteine 185, cysteine 188, cysteine 199, and cysteine 202 each coordinate Zn(2+). CXXCXGXG motif repeat units follow at residues 142-149 (CSKCHGSG), 159-166 (CGTCHGSG), 185-192 (CHTCNGTG), and 199-206 (CDECAGDG).

This sequence belongs to the DnaJ family. Homodimer. Requires Zn(2+) as cofactor.

The protein localises to the cytoplasm. Participates actively in the response to hyperosmotic and heat shock by preventing the aggregation of stress-denatured proteins and by disaggregating proteins, also in an autonomous, DnaK-independent fashion. Unfolded proteins bind initially to DnaJ; upon interaction with the DnaJ-bound protein, DnaK hydrolyzes its bound ATP, resulting in the formation of a stable complex. GrpE releases ADP from DnaK; ATP binding to DnaK triggers the release of the substrate protein, thus completing the reaction cycle. Several rounds of ATP-dependent interactions between DnaJ, DnaK and GrpE are required for fully efficient folding. Also involved, together with DnaK and GrpE, in the DNA replication of plasmids through activation of initiation proteins. The protein is Chaperone protein DnaJ 1 of Corynebacterium efficiens (strain DSM 44549 / YS-314 / AJ 12310 / JCM 11189 / NBRC 100395).